Consider the following 302-residue polypeptide: 33 kDa chaperonin (302 aa).

2 cysteine pairs are disulfide-bonded: Cys-234-Cys-236 and Cys-267-Cys-270.

Belongs to the HSP33 family. In terms of processing, under oxidizing conditions two disulfide bonds are formed involving the reactive cysteines. Under reducing conditions zinc is bound to the reactive cysteines and the protein is inactive.

It localises to the cytoplasm. In terms of biological role, redox regulated molecular chaperone. Protects both thermally unfolding and oxidatively damaged proteins from irreversible aggregation. Plays an important role in the bacterial defense system toward oxidative stress. In Neisseria meningitidis serogroup A / serotype 4A (strain DSM 15465 / Z2491), this protein is 33 kDa chaperonin.